We begin with the raw amino-acid sequence, 175 residues long: Inosine/xanthosine triphosphatase (175 aa).

8-13 (TTNPAK) provides a ligand contact to substrate. Positions 38 and 68 each coordinate Mg(2+). 68-69 (EA) is a substrate binding site.

This sequence belongs to the YjjX NTPase family. Homodimer. The cofactor is Mg(2+). Mn(2+) serves as cofactor.

It carries out the reaction XTP + H2O = XDP + phosphate + H(+). The enzyme catalyses ITP + H2O = IDP + phosphate + H(+). Phosphatase that hydrolyzes non-canonical purine nucleotides such as XTP and ITP to their respective diphosphate derivatives. Probably excludes non-canonical purines from DNA/RNA precursor pool, thus preventing their incorporation into DNA/RNA and avoiding chromosomal lesions. In Escherichia coli O127:H6 (strain E2348/69 / EPEC), this protein is Inosine/xanthosine triphosphatase (yjjX).